The following is a 426-amino-acid chain: Serine--tRNA ligase (426 aa).

A disordered region spans residues R37–A63. An L-serine-binding site is contributed by T233 to E235. R264–E266 contacts ATP. E287 lines the L-serine pocket. E351–S354 provides a ligand contact to ATP. S387 is a binding site for L-serine.

The protein belongs to the class-II aminoacyl-tRNA synthetase family. Type-1 seryl-tRNA synthetase subfamily. Homodimer. The tRNA molecule binds across the dimer.

It is found in the cytoplasm. It carries out the reaction tRNA(Ser) + L-serine + ATP = L-seryl-tRNA(Ser) + AMP + diphosphate + H(+). The enzyme catalyses tRNA(Sec) + L-serine + ATP = L-seryl-tRNA(Sec) + AMP + diphosphate + H(+). It functions in the pathway aminoacyl-tRNA biosynthesis; selenocysteinyl-tRNA(Sec) biosynthesis; L-seryl-tRNA(Sec) from L-serine and tRNA(Sec): step 1/1. Catalyzes the attachment of serine to tRNA(Ser). Is also able to aminoacylate tRNA(Sec) with serine, to form the misacylated tRNA L-seryl-tRNA(Sec), which will be further converted into selenocysteinyl-tRNA(Sec). The protein is Serine--tRNA ligase of Pseudomonas entomophila (strain L48).